A 523-amino-acid chain; its full sequence is Calcium-dependent protein kinase 1 (523 aa).

The tract at residues 1–36 is disordered; the sequence is MGCNQSKSANDVRGNKVNHVNSKKKNNKREDTNDGE. The N-myristoyl glycine moiety is linked to residue G2. The S-palmitoyl cysteine moiety is linked to residue C3. One can recognise a Protein kinase domain in the interval 57–324; the sequence is YFKVRKLGSG…AEEALNSRWI (268 aa). Residues 63–71, K86, and K90 contribute to the ATP site; that span reads LGSGAYGEV. S65 is subject to Phosphoserine. A Phosphoserine modification is found at S117. The Proton acceptor role is filled by D190. 2 positions are modified to phosphoserine: S216 and S219. T230 bears the Phosphothreonine mark. The residue at position 334 (S334) is a Phosphoserine. The J domain autoinhibitory motif signature appears at 345–352; the sequence is NMRKFEGS. Residues 345-363 are j domain; sequence NMRKFEGSQKLAQAAILFI. The J domain interacts with the EF-hand domains signature appears at 353-363; that stretch reads QKLAQAAILFI. EF-hand domains are found at residues 371-406, 415-450, 451-486, and 487-520; these read EERK…LRNF, NVEE…KQIL, FSEE…TSIS, and EKTW…ICDH. Residues D384, N386, D388, Q390, E395, D428, D430, N432, Y434, E439, D464, D466, S468, K470, E475, D498, N500, D502, M504, and E509 each contribute to the Ca(2+) site.

This sequence belongs to the protein kinase superfamily. Ser/Thr protein kinase family. CDPK subfamily. As to quaternary structure, monomer. Mg(2+) is required as a cofactor. In terms of processing, myristoylated. Myristoylation and palmitoylation are required for the localization to the parasitophorous vacuole membrane. Post-translationally, palmitoylated. Palmitoylation increases in merozoites in response to low level of extracellular K(+) in the host blood. Myristoylation and palmitoylation are required for the localization to the parasitophorous vacuole membrane. Phosphorylation at Thr-230 may regulate CDPK1 kinase activity. Phosphorylation increases in response to an increase in intracellular Ca(2+) levels. Autophosphorylated in vitro. Autophosphorylation does not affect membrane localization in vitro.

The protein resides in the membrane. It localises to the cell membrane. Its subcellular location is the parasitophorous vacuole membrane. It is found in the cytoplasm. The protein localises to the cell projection. The protein resides in the cilium. It localises to the flagellum. Its subcellular location is the host cell membrane. The catalysed reaction is L-seryl-[protein] + ATP = O-phospho-L-seryl-[protein] + ADP + H(+). It catalyses the reaction L-threonyl-[protein] + ATP = O-phospho-L-threonyl-[protein] + ADP + H(+). With respect to regulation, activated by calcium. Upon calcium binding to the EF-hand domains, the C-terminus of the junction domain (J domain) undergoes a conformational change which results in the dissociation of the pseudo-substrate inhibitory motif from the catalytic domain. This, in turn may facilitate the autophosphorylation of the activation loop at Thr-230, which leads to the kinase activation. Functionally, calcium-dependent protein kinase which acts as a sensor and effector of intracellular Ca(2+) levels probably in part downstream of cGMP-activated PKG kinase. During the liver stage, involved in sporozoite motility and thus in sporozoite invasion of host hepatocytes, probably together with CDPK4 and CDPK5. In the mosquito midgut and during the last stage of male gamete exflagellation, may play a role in the rupture of the host erythrocyte membrane. In the mosquito midgut, required for the differentiation of the zygote into the ookinete by promoting the translational activation of a subset of repressed mRNAs; these mRNAs are kept repressed in the zygote by the DOZI- or CITH-containing mRNP complexes. Dispensable during the asexual blood stage. The protein is Calcium-dependent protein kinase 1 of Plasmodium berghei (strain Anka).